We begin with the raw amino-acid sequence, 289 residues long: 4-hydroxy-3-methylbut-2-enyl diphosphate reductase (289 aa).

Cys-13 serves as a coordination point for [4Fe-4S] cluster. Residues His-42 and His-74 each coordinate (2E)-4-hydroxy-3-methylbut-2-enyl diphosphate. Dimethylallyl diphosphate is bound by residues His-42 and His-74. 2 residues coordinate isopentenyl diphosphate: His-42 and His-74. Cys-96 contacts [4Fe-4S] cluster. His-124 serves as a coordination point for (2E)-4-hydroxy-3-methylbut-2-enyl diphosphate. Residue His-124 coordinates dimethylallyl diphosphate. Residue His-124 coordinates isopentenyl diphosphate. The active-site Proton donor is Glu-126. Thr-165 lines the (2E)-4-hydroxy-3-methylbut-2-enyl diphosphate pocket. Cys-193 contacts [4Fe-4S] cluster. (2E)-4-hydroxy-3-methylbut-2-enyl diphosphate-binding residues include Ser-221, Asn-223, and Ser-265. Dimethylallyl diphosphate contacts are provided by Ser-221, Asn-223, and Ser-265. Residues Ser-221, Asn-223, and Ser-265 each contribute to the isopentenyl diphosphate site.

It belongs to the IspH family. [4Fe-4S] cluster is required as a cofactor.

The enzyme catalyses isopentenyl diphosphate + 2 oxidized [2Fe-2S]-[ferredoxin] + H2O = (2E)-4-hydroxy-3-methylbut-2-enyl diphosphate + 2 reduced [2Fe-2S]-[ferredoxin] + 2 H(+). It carries out the reaction dimethylallyl diphosphate + 2 oxidized [2Fe-2S]-[ferredoxin] + H2O = (2E)-4-hydroxy-3-methylbut-2-enyl diphosphate + 2 reduced [2Fe-2S]-[ferredoxin] + 2 H(+). It functions in the pathway isoprenoid biosynthesis; dimethylallyl diphosphate biosynthesis; dimethylallyl diphosphate from (2E)-4-hydroxy-3-methylbutenyl diphosphate: step 1/1. The protein operates within isoprenoid biosynthesis; isopentenyl diphosphate biosynthesis via DXP pathway; isopentenyl diphosphate from 1-deoxy-D-xylulose 5-phosphate: step 6/6. Highly sensitive to dioxygen. Its function is as follows. Catalyzes the conversion of 1-hydroxy-2-methyl-2-(E)-butenyl 4-diphosphate (HMBPP) into a mixture of isopentenyl diphosphate (IPP) and dimethylallyl diphosphate (DMAPP). Acts in the terminal step of the DOXP/MEP pathway for isoprenoid precursor biosynthesis. This is 4-hydroxy-3-methylbut-2-enyl diphosphate reductase from Aquifex aeolicus (strain VF5).